A 410-amino-acid polypeptide reads, in one-letter code: F-box protein At5g36730 (410 aa).

The region spanning 1-46 (MAMSNLPRDLLEEVLSRVPVKSIAAVRSTCKNWNSLTYGQSFTKKL) is the F-box domain.

This is F-box protein At5g36730 from Arabidopsis thaliana (Mouse-ear cress).